Here is a 246-residue protein sequence, read N- to C-terminus: Probable transcriptional regulatory protein Ent638_2432 (246 aa).

It belongs to the TACO1 family.

It is found in the cytoplasm. This chain is Probable transcriptional regulatory protein Ent638_2432, found in Enterobacter sp. (strain 638).